Here is a 226-residue protein sequence, read N- to C-terminus: tRNA (guanine-N(7)-)-methyltransferase (226 aa).

The interval 1–21 (MTHPQQPHGPLRSFGRLKSRP) is disordered. S-adenosyl-L-methionine contacts are provided by glutamate 59, glutamate 84, aspartate 111, and aspartate 133. Aspartate 133 is a catalytic residue. Substrate is bound at residue lysine 137. The segment at 139 to 144 (RHNKRR) is interaction with RNA. Substrate-binding positions include aspartate 169 and 206-209 (TRYE).

It belongs to the class I-like SAM-binding methyltransferase superfamily. TrmB family.

It catalyses the reaction guanosine(46) in tRNA + S-adenosyl-L-methionine = N(7)-methylguanosine(46) in tRNA + S-adenosyl-L-homocysteine. The protein operates within tRNA modification; N(7)-methylguanine-tRNA biosynthesis. In terms of biological role, catalyzes the formation of N(7)-methylguanine at position 46 (m7G46) in tRNA. The sequence is that of tRNA (guanine-N(7)-)-methyltransferase from Caulobacter sp. (strain K31).